The primary structure comprises 452 residues: Regulator of nonsense transcripts 3A (452 aa).

2 stretches are compositionally biased toward basic and acidic residues: residues 205–363 and 376–401; these read RIRE…DRAK and TGDK…KDRP. A disordered region spans residues 205-452; that stretch reads RIREEKREER…GTGSEKSADE (248 aa).

Belongs to the RENT3 family.

It localises to the nucleus. The protein resides in the cytoplasm. In terms of biological role, involved in nonsense-mediated decay (NMD) of mRNAs containing premature stop codons by associating with the nuclear exon junction complex (EJC) and serving as link between the EJC core and NMD machinery. Recruits UPF2 at the cytoplasmic side of the nuclear envelope and the subsequent formation of an UPF1-UPF2-UPF3 surveillance complex (including UPF1 bound to release factors at the stalled ribosome) is believed to activate NMD. Binds spliced mRNA upstream of exon-exon junctions. This is Regulator of nonsense transcripts 3A from Danio rerio (Zebrafish).